Reading from the N-terminus, the 166-residue chain is Eukaryotic translation initiation factor 5A (166 aa).

The tract at residues 1–21 is disordered; it reads MSDEDHDFSHQGGGDNASKTY. Lysine 53 carries the hypusine modification. The disordered stretch occupies residues 101-121; it reads EDPSLPSHLSLMDDEGESRED. The segment covering 112 to 121 has biased composition (acidic residues); it reads MDDEGESRED.

This sequence belongs to the eIF-5A family. Post-translationally, lys-53 undergoes hypusination, a unique post-translational modification that consists in the addition of a butylamino group from spermidine to lysine side chain, leading to the formation of the unusual amino acid hypusine. eIF-5As are the only known proteins to undergo this modification, which is essential for their function.

It localises to the cytoplasm. In terms of biological role, translation factor that promotes translation elongation and termination, particularly upon ribosome stalling at specific amino acid sequence contexts. Binds between the exit (E) and peptidyl (P) site of the ribosome and promotes rescue of stalled ribosome: specifically required for efficient translation of polyproline-containing peptides as well as other motifs that stall the ribosome. Acts as a ribosome quality control (RQC) cofactor by joining the RQC complex to facilitate peptidyl transfer during CAT tailing step. The polypeptide is Eukaryotic translation initiation factor 5A (Leishmania donovani).